The following is a 158-amino-acid chain: NAD(P)H-quinone oxidoreductase subunit J, chloroplastic (158 aa).

The protein belongs to the complex I 30 kDa subunit family. NDH is composed of at least 16 different subunits, 5 of which are encoded in the nucleus.

It localises to the plastid. The protein localises to the chloroplast thylakoid membrane. The enzyme catalyses a plastoquinone + NADH + (n+1) H(+)(in) = a plastoquinol + NAD(+) + n H(+)(out). It carries out the reaction a plastoquinone + NADPH + (n+1) H(+)(in) = a plastoquinol + NADP(+) + n H(+)(out). Functionally, NDH shuttles electrons from NAD(P)H:plastoquinone, via FMN and iron-sulfur (Fe-S) centers, to quinones in the photosynthetic chain and possibly in a chloroplast respiratory chain. The immediate electron acceptor for the enzyme in this species is believed to be plastoquinone. Couples the redox reaction to proton translocation, and thus conserves the redox energy in a proton gradient. This is NAD(P)H-quinone oxidoreductase subunit J, chloroplastic from Angiopteris evecta (Mule's foot fern).